Consider the following 102-residue polypeptide: Small ribosomal subunit protein uS10 (102 aa).

The protein belongs to the universal ribosomal protein uS10 family. In terms of assembly, part of the 30S ribosomal subunit.

Its function is as follows. Involved in the binding of tRNA to the ribosomes. The polypeptide is Small ribosomal subunit protein uS10 (Chloroflexus aurantiacus (strain ATCC 29366 / DSM 635 / J-10-fl)).